We begin with the raw amino-acid sequence, 756 residues long: 1-phosphatidylinositol 4,5-bisphosphate phosphodiesterase delta-1 (756 aa).

Residues 21-130 (ALLKGSQLLK…WVQGLRKIIH (110 aa)) form the PH domain. The substrate binding stretch occupies residues 30 to 57 (KVKSSSWRRERFYKLQEDCKTIWQESRK). 2 consecutive EF-hand domains span residues 140–175 (KLQHWIHSCLRKADKNKDNKMNFKELKDFLKELNIQ) and 176–211 (VDDGYARKIFRECDHSQTDSLEDEEIETFYKMLTQR). Ca(2+) is bound by residues Asp153, Asn155, Asp157, Lys159, Glu164, Asp189, Ser191, Thr193, Ser195, and Glu200. O-linked (GlcNAc) serine glycosylation is present at Ser191. Thr193 is a glycosylation site (O-linked (GlcNAc) threonine). Residues 296 to 440 (QDMDQPLSHY…LKGKILLKGK (145 aa)) form the PI-PLC X-box domain. The active site involves His311. Asn312, Glu341, and Asp343 together coordinate Ca(2+). His356 is an active-site residue. Glu390 contacts Ca(2+). Substrate-binding residues include Lys438 and Lys440. A Phosphothreonine modification is found at Thr457. Ser460 bears the Phosphoserine mark. Positions 492–609 (LSDMIIYCKS…GYVLKPAFLR (118 aa)) constitute a PI-PLC Y-box domain. Positions 522 and 549 each coordinate substrate. The 129-residue stretch at 609–737 (RDPNTTFNSR…QGYRHVHLLS (129 aa)) folds into the C2 domain. Ile651, Asp653, Asn677, Asp706, Tyr707, and Asp708 together coordinate Ca(2+).

In terms of assembly, interacts with TGM2. Requires Ca(2+) as cofactor.

The catalysed reaction is a 1,2-diacyl-sn-glycero-3-phospho-(1D-myo-inositol-4,5-bisphosphate) + H2O = 1D-myo-inositol 1,4,5-trisphosphate + a 1,2-diacyl-sn-glycerol + H(+). The enzyme catalyses a 1,2-diacyl-sn-glycero-3-phospho-(1D-myo-inositol) + H2O = 1D-myo-inositol 1-phosphate + a 1,2-diacyl-sn-glycerol + H(+). In terms of biological role, the production of the second messenger molecules diacylglycerol (DAG) and inositol 1,4,5-trisphosphate (IP3) is mediated by activated phosphatidylinositol-specific phospholipase C enzymes. Essential for trophoblast and placental development. Binds phosphatidylinositol 4,5-bisphosphate. The chain is 1-phosphatidylinositol 4,5-bisphosphate phosphodiesterase delta-1 from Rattus norvegicus (Rat).